Consider the following 239-residue polypeptide: Trimethylguanosine synthase (239 aa).

Belongs to the methyltransferase superfamily. Trimethylguanosine synthase family. As to quaternary structure, monomer. Interacts with mug174; both proteins are required to maintain Cajal body integrity.

The protein localises to the nucleus. It localises to the cajal body. The enzyme catalyses a 5'-end (N(7)-methyl 5'-triphosphoguanosine)-ribonucleoside in snRNA + S-adenosyl-L-methionine = a 5'-end (N(2),N(7)-dimethyl 5'-triphosphoguanosine)-ribonucleoside in snRNA + S-adenosyl-L-homocysteine + H(+). The catalysed reaction is a 5'-end (N(7)-methyl 5'-triphosphoguanosine)-ribonucleoside in snoRNA + S-adenosyl-L-methionine = a 5'-end (N(2),N(7)-dimethyl 5'-triphosphoguanosine)-ribonucleoside in snoRNA + S-adenosyl-L-homocysteine + H(+). It catalyses the reaction a 5'-end (N(2),N(7)-dimethyl 5'-triphosphoguanosine)-ribonucleoside in snRNA + S-adenosyl-L-methionine = a 5'-end (N(2),N(2),N(7)-trimethyl 5'-triphosphoguanosine)-ribonucleoside in snRNA + S-adenosyl-L-homocysteine + H(+). It carries out the reaction a 5'-end (N(2),N(7)-dimethyl 5'-triphosphoguanosine)-ribonucleoside in snoRNA + S-adenosyl-L-methionine = a 5'-end (N(2),N(2),N(7)-trimethyl 5'-triphosphoguanosine)-ribonucleoside in snoRNA + S-adenosyl-L-homocysteine + H(+). Substrate inhibited by S-adenosyl-L-homocysteine. Catalyzes the two serial methylation steps for the conversion of the 7-monomethylguanosine (m(7)G) caps of snRNAs and snoRNAs to a 2,2,7-trimethylguanosine (m(2,2,7)G) cap structure. The enzyme is specific for guanine, and N7 methylation must precede N2 methylation. Required for pre-mRNA splicing, pre-rRNA processing and small ribosomal subunit synthesis. Involved in nucleolar structural organization. This chain is Trimethylguanosine synthase (tgs1), found in Schizosaccharomyces pombe (strain 972 / ATCC 24843) (Fission yeast).